Consider the following 509-residue polypeptide: Steroid 17-alpha-hydroxylase/17,20 lyase (509 aa).

N202 contributes to the substrate binding site. C442 contributes to the heme binding site.

The protein belongs to the cytochrome P450 family. Heme is required as a cofactor.

Its subcellular location is the endoplasmic reticulum membrane. The protein localises to the microsome membrane. The catalysed reaction is a C21-steroid + reduced [NADPH--hemoprotein reductase] + O2 = a 17alpha-hydroxy-C21-steroid + oxidized [NADPH--hemoprotein reductase] + H2O + H(+). It carries out the reaction progesterone + reduced [NADPH--hemoprotein reductase] + O2 = 17alpha-hydroxyprogesterone + oxidized [NADPH--hemoprotein reductase] + H2O + H(+). The enzyme catalyses pregnenolone + reduced [NADPH--hemoprotein reductase] + O2 = 17alpha-hydroxypregnenolone + oxidized [NADPH--hemoprotein reductase] + H2O + H(+). It catalyses the reaction 17alpha-hydroxyprogesterone + reduced [NADPH--hemoprotein reductase] + O2 = androst-4-ene-3,17-dione + acetate + oxidized [NADPH--hemoprotein reductase] + H2O + 2 H(+). The catalysed reaction is 17alpha-hydroxyprogesterone + reduced [NADPH--hemoprotein reductase] + O2 = 16alpha,17alpha-dihydroxyprogesterone + oxidized [NADPH--hemoprotein reductase] + H2O + H(+). It carries out the reaction 16alpha,17alpha-dihydroxyprogesterone + reduced [NADPH--hemoprotein reductase] + O2 = 6beta,16alpha,17alpha-trihydroxyprogesterone + oxidized [NADPH--hemoprotein reductase] + H2O + H(+). The enzyme catalyses 17alpha-hydroxypregnenolone + reduced [NADPH--hemoprotein reductase] + O2 = 3beta-hydroxyandrost-5-en-17-one + acetate + oxidized [NADPH--hemoprotein reductase] + H2O + 2 H(+). It catalyses the reaction 16alpha,17alpha-dihydroxypregnenolone + reduced [NADPH--hemoprotein reductase] + O2 = 3beta,16alpha-dihydroxy-androst-5-en-17-one + acetate + oxidized [NADPH--hemoprotein reductase] + H2O + 2 H(+). The catalysed reaction is 3beta-hydroxyandrost-5-en-17-one + reduced [NADPH--hemoprotein reductase] + O2 = 3beta,16alpha-dihydroxy-androst-5-en-17-one + oxidized [NADPH--hemoprotein reductase] + H2O + H(+). It carries out the reaction androst-4-ene-3,17-dione + reduced [NADPH--hemoprotein reductase] + O2 = 16alpha-hydroxyandrost-4-ene-3,17-dione + oxidized [NADPH--hemoprotein reductase] + H2O + H(+). It functions in the pathway steroid hormone biosynthesis. The protein operates within steroid biosynthesis; glucocorticoid biosynthesis. Regulated predominantly by intracellular cAMP levels. The 17,20-lyase activity is stimulated by cytochrome b5, which acts as an allosteric effector increasing the Vmax of the lyase activity. A cytochrome P450 monooxygenase involved in corticoid and androgen biosynthesis. Catalyzes 17-alpha hydroxylation of C21 steroids, which is common for both pathways. A second oxidative step, required only for androgen synthesis, involves an acyl-carbon cleavage. The 17-alpha hydroxy intermediates, as part of adrenal glucocorticoids biosynthesis pathway, are precursors of cortisol. Hydroxylates steroid hormones, pregnenolone and progesterone to form 17-alpha hydroxy metabolites, followed by the cleavage of the C17-C20 bond to form C19 steroids, dehydroepiandrosterone (DHEA) and androstenedione. Has 16-alpha hydroxylase activity. Catalyzes 16-alpha hydroxylation of 17-alpha hydroxy pregnenolone, followed by the cleavage of the C17-C20 bond to form 16-alpha-hydroxy DHEA. Also 16-alpha hydroxylates androgens, relevant for estriol synthesis. Mechanistically, uses molecular oxygen inserting one oxygen atom into a substrate, and reducing the second into a water molecule, with two electrons provided by NADPH via cytochrome P450 reductase (CPR; NADPH-ferrihemoprotein reductase). In Capra hircus (Goat), this protein is Steroid 17-alpha-hydroxylase/17,20 lyase (CYP17A1).